The chain runs to 288 residues: 4-hydroxybenzoate octaprenyltransferase (288 aa).

6 consecutive transmembrane segments (helical) span residues 20 to 40 (IGTL…AGGL), 43 to 63 (LKVF…GCII), 96 to 116 (LFVV…PLVV), 210 to 230 (QIIG…GMVA), 234 to 254 (AIYA…QKLI), and 262 to 282 (CFTA…ALML).

The protein belongs to the UbiA prenyltransferase family. Mg(2+) serves as cofactor.

Its subcellular location is the cell inner membrane. It catalyses the reaction all-trans-octaprenyl diphosphate + 4-hydroxybenzoate = 4-hydroxy-3-(all-trans-octaprenyl)benzoate + diphosphate. Its pathway is cofactor biosynthesis; ubiquinone biosynthesis. In terms of biological role, catalyzes the prenylation of para-hydroxybenzoate (PHB) with an all-trans polyprenyl group. Mediates the second step in the final reaction sequence of ubiquinone-8 (UQ-8) biosynthesis, which is the condensation of the polyisoprenoid side chain with PHB, generating the first membrane-bound Q intermediate 3-octaprenyl-4-hydroxybenzoate. The polypeptide is 4-hydroxybenzoate octaprenyltransferase (Shewanella pealeana (strain ATCC 700345 / ANG-SQ1)).